A 508-amino-acid polypeptide reads, in one-letter code: Photosystem II CP47 reaction center protein (508 aa).

Helical transmembrane passes span Ala-21–Ser-36, Ile-101–Trp-115, Gly-140–Phe-156, Ile-203–Ser-218, Val-237–Val-252, and Ser-457–Arg-472.

This sequence belongs to the PsbB/PsbC family. PsbB subfamily. In terms of assembly, PSII is composed of 1 copy each of membrane proteins PsbA, PsbB, PsbC, PsbD, PsbE, PsbF, PsbH, PsbI, PsbJ, PsbK, PsbL, PsbM, PsbT, PsbX, PsbY, PsbZ, Psb30/Ycf12, at least 3 peripheral proteins of the oxygen-evolving complex and a large number of cofactors. It forms dimeric complexes. Interacts with PAM68. Interacts with HHL1. Requires Binds multiple chlorophylls. PSII binds additional chlorophylls, carotenoids and specific lipids. as cofactor.

The protein localises to the plastid. Its subcellular location is the chloroplast thylakoid membrane. Its function is as follows. One of the components of the core complex of photosystem II (PSII). It binds chlorophyll and helps catalyze the primary light-induced photochemical processes of PSII. PSII is a light-driven water:plastoquinone oxidoreductase, using light energy to abstract electrons from H(2)O, generating O(2) and a proton gradient subsequently used for ATP formation. In Arabidopsis thaliana (Mouse-ear cress), this protein is Photosystem II CP47 reaction center protein.